The sequence spans 306 residues: Homoserine kinase (306 aa).

91–101 (PLARGLGSSAT) provides a ligand contact to ATP.

This sequence belongs to the GHMP kinase family. Homoserine kinase subfamily.

Its subcellular location is the cytoplasm. It carries out the reaction L-homoserine + ATP = O-phospho-L-homoserine + ADP + H(+). Its pathway is amino-acid biosynthesis; L-threonine biosynthesis; L-threonine from L-aspartate: step 4/5. Catalyzes the ATP-dependent phosphorylation of L-homoserine to L-homoserine phosphate. The polypeptide is Homoserine kinase (Synechocystis sp. (strain ATCC 27184 / PCC 6803 / Kazusa)).